The primary structure comprises 428 residues: Enolase (428 aa).

Position 162 (Gln-162) interacts with (2R)-2-phosphoglycerate. Catalysis depends on Glu-204, which acts as the Proton donor. Mg(2+) contacts are provided by Asp-241, Glu-283, and Asp-310. Positions 335, 364, 365, and 386 each coordinate (2R)-2-phosphoglycerate. Lys-335 functions as the Proton acceptor in the catalytic mechanism.

This sequence belongs to the enolase family. The cofactor is Mg(2+).

Its subcellular location is the cytoplasm. The protein resides in the secreted. It localises to the cell surface. The enzyme catalyses (2R)-2-phosphoglycerate = phosphoenolpyruvate + H2O. It functions in the pathway carbohydrate degradation; glycolysis; pyruvate from D-glyceraldehyde 3-phosphate: step 4/5. Catalyzes the reversible conversion of 2-phosphoglycerate (2-PG) into phosphoenolpyruvate (PEP). It is essential for the degradation of carbohydrates via glycolysis. The sequence is that of Enolase from Nocardia farcinica (strain IFM 10152).